The chain runs to 298 residues: MESLMIQGAACRCQQFLALCKLRVVSLIVFTAVIGMFLAVPAWPSWTTIWAGTLGIGLVASAAAAFNCLIEQKIDAVMARTRARPLPRGELTGTQTLVFAGVLGGSGLLLLHTVVNPLTMWLTLATFVGYAVIYTVLLKPATPQNIVIGGASGAMPPVLGWAAATGEIHHDALLLFLIIFAWTPPHFWALALYRREEYARAGLPMLPVTHGEAYTRLHVLLYTLLLLAVSLLPVGTGMAGALYLVGAVLLGARFIQYGWALHREYSDALARRTFRYSIWYLAALFAIMLLDHYFPIPV.

8 helical membrane passes run 24–44 (VVSL…PAWP), 46–66 (WTTI…AAAF), 97–117 (LVFA…VVNP), 118–138 (LTMW…TVLL), 146–166 (IVIG…AATG), 172–192 (ALLL…ALAL), 231–251 (LLPV…VLLG), and 278–298 (IWYL…PIPV).

This sequence belongs to the UbiA prenyltransferase family. Protoheme IX farnesyltransferase subfamily.

It is found in the cell inner membrane. It catalyses the reaction heme b + (2E,6E)-farnesyl diphosphate + H2O = Fe(II)-heme o + diphosphate. The protein operates within porphyrin-containing compound metabolism; heme O biosynthesis; heme O from protoheme: step 1/1. In terms of biological role, converts heme B (protoheme IX) to heme O by substitution of the vinyl group on carbon 2 of heme B porphyrin ring with a hydroxyethyl farnesyl side group. In Thiobacillus denitrificans (strain ATCC 25259 / T1), this protein is Protoheme IX farnesyltransferase.